Consider the following 425-residue polypeptide: Serine--tRNA ligase (425 aa).

Position 230 to 232 (230 to 232) interacts with L-serine; it reads TAE. Position 261–263 (261–263) interacts with ATP; that stretch reads RSE. Residue Glu-284 participates in L-serine binding. An ATP-binding site is contributed by 348–351; sequence EISS. Ser-384 contributes to the L-serine binding site.

This sequence belongs to the class-II aminoacyl-tRNA synthetase family. Type-1 seryl-tRNA synthetase subfamily. Homodimer. The tRNA molecule binds across the dimer.

It is found in the cytoplasm. It carries out the reaction tRNA(Ser) + L-serine + ATP = L-seryl-tRNA(Ser) + AMP + diphosphate + H(+). The catalysed reaction is tRNA(Sec) + L-serine + ATP = L-seryl-tRNA(Sec) + AMP + diphosphate + H(+). Its pathway is aminoacyl-tRNA biosynthesis; selenocysteinyl-tRNA(Sec) biosynthesis; L-seryl-tRNA(Sec) from L-serine and tRNA(Sec): step 1/1. Its function is as follows. Catalyzes the attachment of serine to tRNA(Ser). Is also able to aminoacylate tRNA(Sec) with serine, to form the misacylated tRNA L-seryl-tRNA(Sec), which will be further converted into selenocysteinyl-tRNA(Sec). The chain is Serine--tRNA ligase from Nitratidesulfovibrio vulgaris (strain DSM 19637 / Miyazaki F) (Desulfovibrio vulgaris).